We begin with the raw amino-acid sequence, 314 residues long: Vomeronasal type-1 receptor 95 (314 aa).

At 1 to 18 the chain is on the extracellular side; it reads MNKDNTLYCSAYRIAFFS. Residues 19–39 traverse the membrane as a helical segment; that stretch reads EIGIGISANSCLLLFHTFMFI. Residues 40–48 are Cytoplasmic-facing; the sequence is RGHRPRLTD. The helical transmembrane segment at 49 to 69 threads the bilayer; the sequence is LPIGLVALIHLVMLLLAAYIT. Residues 70 to 88 lie on the Extracellular side of the membrane; that stretch reads EDFFMSSGGWDDITCKLFI. A disulfide bridge connects residues Cys84 and Cys171. Residues 89-113 traverse the membrane as a helical segment; sequence FLHRFFRSLSVCDTCMLSVFQAIIL. At 114–133 the chain is on the cytoplasmic side; it reads CPQSSHLAKFKLNSPHHLSC. Residues 134 to 154 traverse the membrane as a helical segment; that stretch reads FFIFMSIFYTSISSHILIAAI. Residues 155–186 lie on the Extracellular side of the membrane; sequence ATQNLTSVNLIYITKSCSFLPMSSSMQRTFST. An N-linked (GlcNAc...) asparagine glycan is attached at Asn158. A helical membrane pass occupies residues 187 to 207; it reads LLAFRNVFLIGLMGLSTCYMA. Topologically, residues 208-235 are cytoplasmic; it reads TLLCRHKTRSQQLQNSKLSPKATPEQRA. Residues 236 to 256 traverse the membrane as a helical segment; it reads IWTILMLMSFFLIISTFDSIM. The Extracellular segment spans residues 257-268; it reads TYSRTIFQGNQS. A glycan (N-linked (GlcNAc...) asparagine) is linked at Asn266. A helical membrane pass occupies residues 269 to 289; sequence LYCVQIPVAHGYAAFSPLLVL. At 290–314 the chain is on the cytoplasmic side; it reads NNEKRLTSLMISMYDRIVRLESLCS.

It belongs to the G-protein coupled receptor 1 family.

It is found in the cell membrane. Its function is as follows. Putative pheromone receptor implicated in the regulation of social as well as reproductive behavior. The chain is Vomeronasal type-1 receptor 95 (Vom1r95) from Rattus norvegicus (Rat).